We begin with the raw amino-acid sequence, 65 residues long: 7 kDa A-type inclusion protein (65 aa).

Over residues 1 to 20 (MSNQNIPQLSEYQTSVSQVA) the composition is skewed to polar residues. The interval 1-31 (MSNQNIPQLSEYQTSVSQVAVTPPPKPETPQ) is disordered.

The polypeptide is 7 kDa A-type inclusion protein (Vaccinia virus (strain Copenhagen) (VACV)).